The sequence spans 387 residues: Acetylserotonin O-methyltransferase (387 aa).

S-adenosyl-L-methionine-binding positions include Y153, W170, E216, 246 to 248 (GDF), and R263. H266 (proton donor/acceptor) is an active-site residue. Residues D267 and Q317 each coordinate substrate. Positions 355-387 (ARGGGAGARSDGGGGEATSQTGSGTGREVGAQD) are disordered. Gly residues predominate over residues 356-370 (RGGGAGARSDGGGGE).

Belongs to the class I-like SAM-binding methyltransferase superfamily. Cation-independent O-methyltransferase family. In terms of assembly, homodimer.

It catalyses the reaction N-acetylserotonin + S-adenosyl-L-methionine = melatonin + S-adenosyl-L-homocysteine + H(+). It functions in the pathway aromatic compound metabolism; melatonin biosynthesis; melatonin from serotonin: step 1/2. Its function is as follows. Catalyzes the transfer of a methyl group onto N-acetylserotonin, producing melatonin (N-acetyl-5-methoxytryptamine). The polypeptide is Acetylserotonin O-methyltransferase (Asmt) (Mus musculus molossinus (Japanese house mouse)).